Reading from the N-terminus, the 217-residue chain is Cytochrome b5 domain-containing protein 1 (217 aa).

A Cytochrome b5 heme-binding domain is found at 6–72; the sequence is PRFYTPREVS…NPKTGDVKTH (67 aa). The heme site is built by His41 and His72.

This sequence belongs to the cytochrome b5 family.

The protein localises to the cytoplasm. Its subcellular location is the cytoskeleton. The protein resides in the cilium axoneme. Radial spoke stalk protein that binds heme under oxidizing conditions. Required for the coordinated beating of multiple cilia maybe by functioning in a redox signaling pathway. This Xenopus tropicalis (Western clawed frog) protein is Cytochrome b5 domain-containing protein 1 (cyb5d1).